The following is a 128-amino-acid chain: Large ribosomal subunit protein bL12 (128 aa).

It belongs to the bacterial ribosomal protein bL12 family. In terms of assembly, homodimer. Part of the ribosomal stalk of the 50S ribosomal subunit. Forms a multimeric L10(L12)X complex, where L10 forms an elongated spine to which 2 to 4 L12 dimers bind in a sequential fashion. Binds GTP-bound translation factors.

Functionally, forms part of the ribosomal stalk which helps the ribosome interact with GTP-bound translation factors. Is thus essential for accurate translation. This is Large ribosomal subunit protein bL12 from Desulfosudis oleivorans (strain DSM 6200 / JCM 39069 / Hxd3) (Desulfococcus oleovorans).